The following is a 425-amino-acid chain: AFP homolog 2 (425 aa).

2 disordered regions span residues 1–207 (MDDD…SGTE) and 288–327 (PFAG…DNSN). The interval 7-17 (LELSLGLSCGG) is necessary and sufficient for the interaction with TOPLESS. Residues 20-34 (GKAKGNNNNNAGSSS) are compositionally biased toward low complexity. A compositionally biased stretch (basic and acidic residues) spans 37–54 (YRAEGGDRSAKVIDDFKN). Over residues 66-81 (PSSGSQRSDSGQQPPQ) the composition is skewed to low complexity. Positions 124–140 (NDDKKKEKDSSHVDMHE) are enriched in basic and acidic residues. 3 stretches are compositionally biased toward polar residues: residues 146 to 158 (SHVS…GSTA), 185 to 197 (TDTN…TGQR), and 288 to 299 (PFAGRVPSNSAT). Residues 322–425 (TGDNSNLNTA…MGMTAASAHT (104 aa)) form a necessary and sufficient for the interaction with the JAZ proteins region.

Belongs to the Ninja family. Component of a complex at least composed of TOPLESS, TPR2, TPR3, TIFY4B/PPD2, MYC3/ATR2 and TIFY3B/JAZ12. Interacts (via C-terminus) with TIFY10A/JAZ1; TIFY10B/JAZ2; TIFY6B/JAZ3; TIFY6A/JAZ4; TIFY11A/JAZ5; TIFY11B/JAZ6; TIFY7/JAZ9; TIFY9/JAZ10; TIFY3A/JAZ11; TIFY3B/JAZ12; TIFY4A/PPD1; TIFY4B/PPD2 and TIFY8 (via TIFY domain). Interacts with TOPLESS. Interacts with PAT1H1.

It localises to the nucleus. Acts as a transcriptional repressor. Negative regulator of jasmonate responses. Connects the JAZ proteins and the non-JAZ protein TIFY8 with the TOPLESS corepressors. This is AFP homolog 2 from Arabidopsis thaliana (Mouse-ear cress).